Consider the following 203-residue polypeptide: Probable GTP-binding protein EngB (203 aa).

The region spanning 24-199 (DGSEVAFAGR…HTVIETWLGL (176 aa)) is the EngB-type G domain. GTP-binding positions include 32 to 39 (GRSNAGKS), 59 to 63 (GRTQQ), 77 to 80 (DLPG), 144 to 147 (TKAD), and 178 to 180 (FSS). Residues Ser39 and Thr61 each contribute to the Mg(2+) site.

Belongs to the TRAFAC class TrmE-Era-EngA-EngB-Septin-like GTPase superfamily. EngB GTPase family. The cofactor is Mg(2+).

In terms of biological role, necessary for normal cell division and for the maintenance of normal septation. This is Probable GTP-binding protein EngB from Xylella fastidiosa (strain Temecula1 / ATCC 700964).